The primary structure comprises 236 residues: MRTPWAAMHQPAFVLHSRPYKESSALVDLFTPQGRLRAVMRAARGKAGSLIRPFVSLEVELRGKSELKTVARLESAGPAHWLDGQALFSGMYLNELLIRLLPAEDAHPALFEHYVATLPALAEHRPLEPLLRAFEWRLLDELGYGFALDIDIAGQPIDAQRLYRLVPDAGLEPVVGFQPGLFNGAELLAMAEADWQVPGALAAAKRLMRQALAPHLGGRPLVSRELFMNLKESPRD.

This sequence belongs to the RecO family.

Its function is as follows. Involved in DNA repair and RecF pathway recombination. The protein is DNA repair protein RecO of Stutzerimonas stutzeri (strain A1501) (Pseudomonas stutzeri).